A 499-amino-acid chain; its full sequence is Increased recombination centers protein 15 (499 aa).

An FAD-binding site is contributed by 47–56; sequence DQRASLGGAY.

The protein belongs to the class-I pyridine nucleotide-disulfide oxidoreductase family.

It localises to the cytoplasm. This Saccharomyces cerevisiae (strain ATCC 204508 / S288c) (Baker's yeast) protein is Increased recombination centers protein 15 (IRC15).